The following is an 804-amino-acid chain: Leucine--tRNA ligase (804 aa).

The short motif at 39–50 (PFPSGKGLHVGH) is the 'HIGH' region element. The 'KMSKS' region motif lies at 573–577 (KMSKS). Lys576 serves as a coordination point for ATP.

This sequence belongs to the class-I aminoacyl-tRNA synthetase family.

The protein localises to the cytoplasm. The catalysed reaction is tRNA(Leu) + L-leucine + ATP = L-leucyl-tRNA(Leu) + AMP + diphosphate. The sequence is that of Leucine--tRNA ligase from Lactobacillus gasseri (strain ATCC 33323 / DSM 20243 / BCRC 14619 / CIP 102991 / JCM 1131 / KCTC 3163 / NCIMB 11718 / NCTC 13722 / AM63).